The chain runs to 308 residues: RNA pseudouridylate synthase domain-containing protein 1 (308 aa).

Met1 is subject to N-acetylmethionine. Asp67 is an active-site residue. The disordered stretch occupies residues 257–292 (APDPDPSEGGPGPCSPCTPLPGPGRPPPPPETEVQR). Positions 269–287 (PCSPCTPLPGPGRPPPPPE) are enriched in pro residues.

Belongs to the pseudouridine synthase RluA family.

This is RNA pseudouridylate synthase domain-containing protein 1 (RPUSD1) from Bos taurus (Bovine).